A 932-amino-acid polypeptide reads, in one-letter code: Beta-mannosidase A (932 aa).

Positions 1–21 (MRIREQTILALLSPGLPPVTG) are cleaved as a signal peptide. Residues asparagine 40, asparagine 248, asparagine 283, asparagine 317, and asparagine 348 are each glycosylated (N-linked (GlcNAc...) asparagine). The active-site Proton donor is the glutamate 480. Residues asparagine 538, asparagine 609, asparagine 632, asparagine 659, asparagine 739, asparagine 762, and asparagine 791 are each glycosylated (N-linked (GlcNAc...) asparagine).

This sequence belongs to the glycosyl hydrolase 2 family. Beta-mannosidase A subfamily. As to quaternary structure, homodimer.

The protein resides in the secreted. The catalysed reaction is Hydrolysis of terminal, non-reducing beta-D-mannose residues in beta-D-mannosides.. Its pathway is glycan metabolism; N-glycan degradation. Exoglycosidase that cleaves the single beta-linked mannose residue from the non-reducing end of beta-mannosidic oligosaccharides of various complexity and length. Involved in the degradation of polymeric mannan and galactomannan. This is Beta-mannosidase A (mndA) from Aspergillus clavatus (strain ATCC 1007 / CBS 513.65 / DSM 816 / NCTC 3887 / NRRL 1 / QM 1276 / 107).